The following is a 425-amino-acid chain: Riboflavin biosynthesis protein RibBA (425 aa).

Positions 1–204 are DHBP synthase; sequence MTRLDSVERA…IADLIEWRRK (204 aa). D-ribulose 5-phosphate-binding positions include 28-29, Asp33, 141-145, and Glu165; these read RE and RPGHT. Glu29 lines the Mg(2+) pocket. Position 144 (His144) interacts with Mg(2+). The segment at 205–425 is GTP cyclohydrolase II; the sequence is HEKHIERVAE…HLPGEFGGAL (221 aa). 259–263 provides a ligand contact to GTP; it reads RVHSE. Zn(2+) contacts are provided by Cys264, Cys275, and Cys277. Residues Gln280, 303-305, and Thr325 each bind GTP; that span reads EGR. The active-site Proton acceptor; for GTP cyclohydrolase activity is Asp337. Catalysis depends on Arg339, which acts as the Nucleophile; for GTP cyclohydrolase activity. The GTP site is built by Thr360 and Lys365.

In the N-terminal section; belongs to the DHBP synthase family. The protein in the C-terminal section; belongs to the GTP cyclohydrolase II family. Requires Mg(2+) as cofactor. The cofactor is Mn(2+). Zn(2+) serves as cofactor.

The enzyme catalyses D-ribulose 5-phosphate = (2S)-2-hydroxy-3-oxobutyl phosphate + formate + H(+). It catalyses the reaction GTP + 4 H2O = 2,5-diamino-6-hydroxy-4-(5-phosphoribosylamino)-pyrimidine + formate + 2 phosphate + 3 H(+). The protein operates within cofactor biosynthesis; riboflavin biosynthesis; 2-hydroxy-3-oxobutyl phosphate from D-ribulose 5-phosphate: step 1/1. Its pathway is cofactor biosynthesis; riboflavin biosynthesis; 5-amino-6-(D-ribitylamino)uracil from GTP: step 1/4. Catalyzes the conversion of D-ribulose 5-phosphate to formate and 3,4-dihydroxy-2-butanone 4-phosphate. Its function is as follows. Catalyzes the conversion of GTP to 2,5-diamino-6-ribosylamino-4(3H)-pyrimidinone 5'-phosphate (DARP), formate and pyrophosphate. The protein is Riboflavin biosynthesis protein RibBA of Mycobacterium marinum (strain ATCC BAA-535 / M).